The primary structure comprises 230 residues: Large ribosomal subunit protein uL1 (230 aa).

It belongs to the universal ribosomal protein uL1 family. Part of the 50S ribosomal subunit.

Functionally, binds directly to 23S rRNA. The L1 stalk is quite mobile in the ribosome, and is involved in E site tRNA release. Protein L1 is also a translational repressor protein, it controls the translation of the L11 operon by binding to its mRNA. This chain is Large ribosomal subunit protein uL1, found in Nitrobacter winogradskyi (strain ATCC 25391 / DSM 10237 / CIP 104748 / NCIMB 11846 / Nb-255).